A 157-amino-acid chain; its full sequence is Beta-defensin 125 (157 aa).

An N-terminal signal peptide occupies residues 1–20; the sequence is MNILMLTFIICGLLTQVTKG. 3 disulfides stabilise this stretch: Cys27-Cys55, Cys35-Cys49, and Cys39-Cys56. A disordered region spans residues 109 to 157; sequence GETMTPETNTPETTVPPSETTTPETTMPPSETATSETMPPPSQTALTHN. Over residues 110–145 the composition is skewed to low complexity; that stretch reads ETMTPETNTPETTVPPSETTTPETTMPPSETATSET.

The protein belongs to the beta-defensin family.

It is found in the secreted. Its function is as follows. Has antibacterial activity. The protein is Beta-defensin 125 (DEFB125) of Gorilla gorilla gorilla (Western lowland gorilla).